We begin with the raw amino-acid sequence, 75 residues long: Exodeoxyribonuclease 7 small subunit (75 aa).

This sequence belongs to the XseB family. As to quaternary structure, heterooligomer composed of large and small subunits.

The protein localises to the cytoplasm. It carries out the reaction Exonucleolytic cleavage in either 5'- to 3'- or 3'- to 5'-direction to yield nucleoside 5'-phosphates.. Bidirectionally degrades single-stranded DNA into large acid-insoluble oligonucleotides, which are then degraded further into small acid-soluble oligonucleotides. This Nostoc punctiforme (strain ATCC 29133 / PCC 73102) protein is Exodeoxyribonuclease 7 small subunit.